The sequence spans 104 residues: Large ribosomal subunit protein uL24 (104 aa).

The protein belongs to the universal ribosomal protein uL24 family. Part of the 50S ribosomal subunit.

One of two assembly initiator proteins, it binds directly to the 5'-end of the 23S rRNA, where it nucleates assembly of the 50S subunit. In terms of biological role, one of the proteins that surrounds the polypeptide exit tunnel on the outside of the subunit. The chain is Large ribosomal subunit protein uL24 from Shewanella woodyi (strain ATCC 51908 / MS32).